Here is a 397-residue protein sequence, read N- to C-terminus: MAFRTLDDIGDVRGKRVLVREDLNVPMEGAAVTDDTRLRSAAPTVAELADKGAIVLVLAHFGRPKGERNPEMSLALVTAAFRSVLGREVRFVGDCCGEEAEAAVAQLQPGDIALLENTRFHKGEEKNDPALAQAMAKLGDLYVNDAFSAAHRAHASTEGLARLLPAFAGRSMQAELEALEKALGKPEHPVAAVVGGAKVSTKLDVLKHLVARVDHLIIGGGMANTFLAARGVDVGKSLCEHDLKDTALAILDAADAADCIVHLPYDVVVAKEFKPNPPTRTVNVHEVAADEMILDVGPAAVEALGDALKTCRTLVWNGPLGAFETPPFDTATVALARTAAALTKGGSLVSVAGGGDTVAALNHAGVAGDFSFVSTAGGAFLEWMEGRELPGVKALEA.

Substrate contacts are provided by residues 22–24 (DLN), Arg-37, 60–63 (HFGR), Arg-119, and Arg-152. Residues Lys-202, Glu-324, and 354–357 (GGDT) contribute to the ATP site.

Belongs to the phosphoglycerate kinase family. Monomer.

The protein resides in the cytoplasm. The enzyme catalyses (2R)-3-phosphoglycerate + ATP = (2R)-3-phospho-glyceroyl phosphate + ADP. It functions in the pathway carbohydrate degradation; glycolysis; pyruvate from D-glyceraldehyde 3-phosphate: step 2/5. This Rhizorhabdus wittichii (strain DSM 6014 / CCUG 31198 / JCM 15750 / NBRC 105917 / EY 4224 / RW1) (Sphingomonas wittichii) protein is Phosphoglycerate kinase.